The primary structure comprises 2004 residues: Alpha-2-macroglobulin homolog (2004 aa).

Positions 1–27 (MLCCLVFKGLLSMDLLRFLLISPFALI) are cleaved as a signal peptide.

Belongs to the protease inhibitor I39 (alpha-2-macroglobulin) family. Bacterial alpha-2-macroglobulin subfamily.

The polypeptide is Alpha-2-macroglobulin homolog (Yersinia pestis).